We begin with the raw amino-acid sequence, 485 residues long: Glutamate--tRNA ligase (485 aa).

Residues 12–22 (PSPTGEPHVGT) carry the 'HIGH' region motif. Residues 253 to 257 (KLSKR) carry the 'KMSKS' region motif. Lysine 256 contacts ATP.

The protein belongs to the class-I aminoacyl-tRNA synthetase family. Glutamate--tRNA ligase type 1 subfamily. Monomer.

The protein resides in the cytoplasm. It catalyses the reaction tRNA(Glu) + L-glutamate + ATP = L-glutamyl-tRNA(Glu) + AMP + diphosphate. In terms of biological role, catalyzes the attachment of glutamate to tRNA(Glu) in a two-step reaction: glutamate is first activated by ATP to form Glu-AMP and then transferred to the acceptor end of tRNA(Glu). In Rhizobium meliloti (strain 1021) (Ensifer meliloti), this protein is Glutamate--tRNA ligase.